The sequence spans 352 residues: tRNA N6-adenosine threonylcarbamoyltransferase (352 aa).

A divalent metal cation is bound by residues histidine 114, histidine 118, and tyrosine 135. Residues 135 to 139 (YVSGG), aspartate 167, glycine 182, glutamate 186, and asparagine 283 contribute to the substrate site. Aspartate 311 contacts a divalent metal cation.

This sequence belongs to the KAE1 / TsaD family. In terms of assembly, component of the EKC/KEOPS complex composed of at least BUD32, CGI121, GON7, KAE1 and PCC1; the whole complex dimerizes. A divalent metal cation is required as a cofactor.

It localises to the cytoplasm. Its subcellular location is the nucleus. It carries out the reaction L-threonylcarbamoyladenylate + adenosine(37) in tRNA = N(6)-L-threonylcarbamoyladenosine(37) in tRNA + AMP + H(+). Its function is as follows. Component of the EKC/KEOPS complex that is required for the formation of a threonylcarbamoyl group on adenosine at position 37 (t(6)A37) in tRNAs that read codons beginning with adenine. The complex is probably involved in the transfer of the threonylcarbamoyl moiety of threonylcarbamoyl-AMP (TC-AMP) to the N6 group of A37. KAE1 likely plays a direct catalytic role in this reaction, but requires other protein(s) of the complex to fulfill this activity. The EKC/KEOPS complex also promotes both telomere uncapping and telomere elongation. The complex is required for efficient recruitment of transcriptional coactivators. The chain is tRNA N6-adenosine threonylcarbamoyltransferase from Phaeosphaeria nodorum (strain SN15 / ATCC MYA-4574 / FGSC 10173) (Glume blotch fungus).